The following is a 224-amino-acid chain: Response regulator protein GraR (224 aa).

Residues 2–115 form the Response regulatory domain; that stretch reads QILLVEDDNT…VLIAKLQAIY (114 aa). At Asp51 the chain carries 4-aspartylphosphate. The ompR/PhoB-type DNA-binding region spans 126–224; that stretch reads KRTLTWQDAV…KVGKGYMAHE (99 aa). Phosphothreonine is present on residues Thr128, Thr130, and Thr149.

In terms of assembly, interacts with GraX. In terms of processing, phosphorylated by GraS. Phosphorylated by Stk1; phosphorylation increases the DNA-binding activity of GraR.

The protein resides in the cytoplasm. Functionally, member of the two-component regulatory system GraR/GraS involved in resistance against cationic antimicrobial peptides (CAMPs). Upon phosphorylation by GraS, functions as a transcription regulator by direct binding to promoter regions of target genes such as adhesins, exoproteins, transporters, toxins, and proteins involved in cell wall synthesis. Down-regulates the expression of many genes involved in RNA and amino acid synthesis or glycolysis. This chain is Response regulator protein GraR (graR), found in Staphylococcus aureus (strain MRSA252).